The chain runs to 29 residues: Cytochrome b6-f complex subunit 8 (29 aa).

The helical transmembrane segment at 3–23 threads the bilayer; it reads ILTLGWVSLLVVFTWSIAMVV.

It belongs to the PetN family. The 4 large subunits of the cytochrome b6-f complex are cytochrome b6, subunit IV (17 kDa polypeptide, PetD), cytochrome f and the Rieske protein, while the 4 small subunits are PetG, PetL, PetM and PetN. The complex functions as a dimer.

The protein resides in the cellular thylakoid membrane. Component of the cytochrome b6-f complex, which mediates electron transfer between photosystem II (PSII) and photosystem I (PSI), cyclic electron flow around PSI, and state transitions. The chain is Cytochrome b6-f complex subunit 8 from Nostoc punctiforme (strain ATCC 29133 / PCC 73102).